The chain runs to 31 residues: Cytochrome b6-f complex subunit 6 (31 aa).

The chain crosses the membrane as a helical span at residues 4–24; the sequence is ITSYFGFLLAALTITSALFIG.

The protein belongs to the PetL family. As to quaternary structure, the 4 large subunits of the cytochrome b6-f complex are cytochrome b6, subunit IV (17 kDa polypeptide, PetD), cytochrome f and the Rieske protein, while the 4 small subunits are PetG, PetL, PetM and PetN. The complex functions as a dimer.

The protein localises to the plastid. The protein resides in the chloroplast thylakoid membrane. Component of the cytochrome b6-f complex, which mediates electron transfer between photosystem II (PSII) and photosystem I (PSI), cyclic electron flow around PSI, and state transitions. PetL is important for photoautotrophic growth as well as for electron transfer efficiency and stability of the cytochrome b6-f complex. This is Cytochrome b6-f complex subunit 6 from Gossypium hirsutum (Upland cotton).